The chain runs to 618 residues: Serine--tRNA ligase, cytoplasmic (618 aa).

417–419 is an L-serine binding site; sequence TSE. 448–450 is a binding site for ATP; that stretch reads RTE. An L-serine-binding site is contributed by Glu-472. 536–539 is an ATP binding site; sequence EVSS. Ser-570 is an L-serine binding site.

It belongs to the class-II aminoacyl-tRNA synthetase family. Type-1 seryl-tRNA synthetase subfamily. In terms of assembly, homodimer. The tRNA molecule binds across the dimer.

It localises to the cytoplasm. The catalysed reaction is tRNA(Ser) + L-serine + ATP = L-seryl-tRNA(Ser) + AMP + diphosphate + H(+). It catalyses the reaction tRNA(Sec) + L-serine + ATP = L-seryl-tRNA(Sec) + AMP + diphosphate + H(+). It participates in aminoacyl-tRNA biosynthesis; selenocysteinyl-tRNA(Sec) biosynthesis; L-seryl-tRNA(Sec) from L-serine and tRNA(Sec): step 1/1. Functionally, catalyzes the attachment of serine to tRNA(Ser). Is also able to aminoacylate tRNA(Sec) with serine, to form the misacylated tRNA L-seryl-tRNA(Sec), which will be further converted into selenocysteinyl-tRNA(Sec). In Plasmodium falciparum (isolate 3D7), this protein is Serine--tRNA ligase, cytoplasmic.